The sequence spans 151 residues: UPF0735 ACT domain-containing protein SSP1116 (151 aa).

The ACT domain maps to 74 to 149 (TLILYVNDIV…HVSKVELISM (76 aa)).

The protein belongs to the UPF0735 family.

This Staphylococcus saprophyticus subsp. saprophyticus (strain ATCC 15305 / DSM 20229 / NCIMB 8711 / NCTC 7292 / S-41) protein is UPF0735 ACT domain-containing protein SSP1116.